A 133-amino-acid polypeptide reads, in one-letter code: uncharacterized protein (133 aa).

It to E.coli ydcQ.

This is an uncharacterized protein from Haemophilus phage HP1 (strain HP1c1) (Bacteriophage HP1).